We begin with the raw amino-acid sequence, 194 residues long: Recombination protein RecR (194 aa).

The C4-type zinc finger occupies 52–67 (CTECRTFTEEEVCHIC). The Toprim domain maps to 76-171 (GQICVVESPA…EASRIAHGVP (96 aa)).

The protein belongs to the RecR family.

In terms of biological role, may play a role in DNA repair. It seems to be involved in an RecBC-independent recombinational process of DNA repair. It may act with RecF and RecO. This is Recombination protein RecR from Vibrio campbellii (strain ATCC BAA-1116).